The chain runs to 524 residues: Cytochrome P450 1A1 (524 aa).

A mitochondrial targeting signal region spans residues 33–44 (TRTWVPKGLKSP). An O-linked (GlcNAc) serine glycan is attached at S71. A substrate-binding site is contributed by F228. C461 serves as a coordination point for heme.

The protein belongs to the cytochrome P450 family. As to quaternary structure, both Cytochrome P450MT2A and Cytochrome P450MT2B interact with cytosolic chaperones HSP70 and HSP90; this interaction is required for initial targeting to mitochondria. P450MT2B interacts (via mitochondrial targeting signal) with TOMM40 (via N-terminus); this interaction is required for translocation across the mitochondrial outer membrane. Heme is required as a cofactor. Post-translationally, two forms; MT2A (long form) and MT2B (short form); are produced by NH2-terminal proteolytic cleavage. This cleavage activates a cryptic mitochondrial targeting signal. As to expression, liver.

The protein resides in the cytoplasm. The protein localises to the endoplasmic reticulum membrane. It localises to the mitochondrion inner membrane. Its subcellular location is the microsome membrane. The catalysed reaction is an organic molecule + reduced [NADPH--hemoprotein reductase] + O2 = an alcohol + oxidized [NADPH--hemoprotein reductase] + H2O + H(+). The enzyme catalyses estrone + reduced [NADPH--hemoprotein reductase] + O2 = 2-hydroxyestrone + oxidized [NADPH--hemoprotein reductase] + H2O + H(+). It catalyses the reaction estrone + reduced [NADPH--hemoprotein reductase] + O2 = 4-hydroxyestrone + oxidized [NADPH--hemoprotein reductase] + H2O + H(+). It carries out the reaction estrone + reduced [NADPH--hemoprotein reductase] + O2 = 6alpha-hydroxyestrone + oxidized [NADPH--hemoprotein reductase] + H2O + H(+). The catalysed reaction is estrone + reduced [NADPH--hemoprotein reductase] + O2 = 15alpha-hydroxyestrone + oxidized [NADPH--hemoprotein reductase] + H2O + H(+). The enzyme catalyses estrone + reduced [NADPH--hemoprotein reductase] + O2 = 16alpha-hydroxyestrone + oxidized [NADPH--hemoprotein reductase] + H2O + H(+). It catalyses the reaction 17beta-estradiol + reduced [NADPH--hemoprotein reductase] + O2 = 2-hydroxy-17beta-estradiol + oxidized [NADPH--hemoprotein reductase] + H2O + H(+). It carries out the reaction 17beta-estradiol + reduced [NADPH--hemoprotein reductase] + O2 = 4-hydroxy-17beta-estradiol + oxidized [NADPH--hemoprotein reductase] + H2O + H(+). The catalysed reaction is 17beta-estradiol + reduced [NADPH--hemoprotein reductase] + O2 = 6alpha-hydroxy-17beta-estradiol + oxidized [NADPH--hemoprotein reductase] + H2O + H(+). The enzyme catalyses 17beta-estradiol + reduced [NADPH--hemoprotein reductase] + O2 = 7alpha-hydroxy-17beta-estradiol + oxidized [NADPH--hemoprotein reductase] + H2O + H(+). It catalyses the reaction 17beta-estradiol + reduced [NADPH--hemoprotein reductase] + O2 = 15alpha-hydroxy-17beta-estradiol + oxidized [NADPH--hemoprotein reductase] + H2O + H(+). It carries out the reaction (5Z,8Z,11Z)-eicosatrienoate + reduced [NADPH--hemoprotein reductase] + O2 = 19-hydroxy-(5Z,8Z,11Z)-eicosatrienoate + oxidized [NADPH--hemoprotein reductase] + H2O + H(+). The catalysed reaction is (5Z,8Z,11Z,14Z)-eicosatetraenoate + reduced [NADPH--hemoprotein reductase] + O2 = 16-hydroxy-(5Z,8Z,11Z,14Z)-eicosatetraenoate + oxidized [NADPH--hemoprotein reductase] + H2O + H(+). The enzyme catalyses (5Z,8Z,11Z,14Z)-eicosatetraenoate + reduced [NADPH--hemoprotein reductase] + O2 = 17-hydroxy-(5Z,8Z,11Z,14Z)-eicosatetraenoate + oxidized [NADPH--hemoprotein reductase] + H2O + H(+). It catalyses the reaction (5Z,8Z,11Z,14Z)-eicosatetraenoate + reduced [NADPH--hemoprotein reductase] + O2 = 18-hydroxy-(5Z,8Z,11Z,14Z)-eicosatetraenoate + oxidized [NADPH--hemoprotein reductase] + H2O + H(+). It carries out the reaction (5Z,8Z,11Z,14Z)-eicosatetraenoate + reduced [NADPH--hemoprotein reductase] + O2 = 19-hydroxy-(5Z,8Z,11Z,14Z)-eicosatetraenoate + oxidized [NADPH--hemoprotein reductase] + H2O + H(+). The catalysed reaction is (5Z,8Z,11Z,14Z,17Z)-eicosapentaenoate + reduced [NADPH--hemoprotein reductase] + O2 = 19-hydroxy-(5Z,8Z,11Z,14Z,17Z)-eicosapentaenoate + oxidized [NADPH--hemoprotein reductase] + H2O + H(+). The enzyme catalyses (5Z,8Z,11Z,14Z)-eicosatetraenoate + reduced [NADPH--hemoprotein reductase] + O2 = (8R,9S)-epoxy-(5Z,11Z,14Z)-eicosatrienoate + oxidized [NADPH--hemoprotein reductase] + H2O + H(+). It catalyses the reaction (5Z,8Z,11Z,14Z)-eicosatetraenoate + reduced [NADPH--hemoprotein reductase] + O2 = (11R,12S)-epoxy-(5Z,8Z,14Z)-eicosatrienoate + oxidized [NADPH--hemoprotein reductase] + H2O + H(+). It carries out the reaction (5Z,8Z,11Z,14Z)-eicosatetraenoate + reduced [NADPH--hemoprotein reductase] + O2 = (11S,12R)-epoxy-(5Z,8Z,14Z)-eicosatrienoate + oxidized [NADPH--hemoprotein reductase] + H2O + H(+). The catalysed reaction is (5Z,8Z,11Z,14Z)-eicosatetraenoate + reduced [NADPH--hemoprotein reductase] + O2 = (14R,15S)-epoxy-(5Z,8Z,11Z)-eicosatrienoate + oxidized [NADPH--hemoprotein reductase] + H2O + H(+). The enzyme catalyses (5Z,8Z,11Z,14Z,17Z)-eicosapentaenoate + reduced [NADPH--hemoprotein reductase] + O2 = (17R,18S)-epoxy-(5Z,8Z,11Z,14Z)-eicosatetraenoate + oxidized [NADPH--hemoprotein reductase] + H2O + H(+). It catalyses the reaction (4Z,7Z,10Z,13Z,16Z,19Z)-docosahexaenoate + reduced [NADPH--hemoprotein reductase] + O2 = (19S,20R)-epoxy-(4Z,7Z,10Z,13Z,16Z)-docosapentaenoate + oxidized [NADPH--hemoprotein reductase] + H2O + H(+). It carries out the reaction (4Z,7Z,10Z,13Z,16Z,19Z)-docosahexaenoate + reduced [NADPH--hemoprotein reductase] + O2 = (19R,20S)-epoxy-(4Z,7Z,10Z,13Z,16Z)-docosapentaenoate + oxidized [NADPH--hemoprotein reductase] + H2O + H(+). The catalysed reaction is all-trans-retinol + reduced [NADPH--hemoprotein reductase] + O2 = all-trans-retinal + oxidized [NADPH--hemoprotein reductase] + 2 H2O + H(+). The enzyme catalyses all-trans-retinal + reduced [NADPH--hemoprotein reductase] + O2 = all-trans-retinoate + oxidized [NADPH--hemoprotein reductase] + H2O + 2 H(+). It catalyses the reaction (13S)-hydroperoxy-(9Z,11E)-octadecadienoate = 13-oxo-(9Z,11E)-octadecadienoate + H2O. It carries out the reaction (12S)-hydroperoxy-(5Z,8Z,10E,14Z)-eicosatetraenoate = 12-oxo-(5Z,8Z,10E,14Z)-eicosatetraenoate + H2O. The catalysed reaction is (15S)-hydroperoxy-(5Z,8Z,11Z,13E)-eicosatetraenoate = 15-oxo-(5Z,8Z,11Z,13E)-eicosatetraenoate + H2O. The enzyme catalyses (5S)-hydroperoxy-(6E,8Z,11Z,14Z)-eicosatetraenoate = 5-oxo-(6E,8Z,11Z,14Z)-eicosatetraenoate + H2O. It functions in the pathway steroid hormone biosynthesis. It participates in lipid metabolism; fatty acid metabolism. The protein operates within cofactor metabolism; retinol metabolism. A cytochrome P450 monooxygenase involved in the metabolism of various endogenous substrates, including fatty acids, steroid hormones and vitamins. Mechanistically, uses molecular oxygen inserting one oxygen atom into a substrate, and reducing the second into a water molecule, with two electrons provided by NADPH via cytochrome P450 reductase (CPR; NADPH-ferrihemoprotein reductase). Catalyzes the hydroxylation of carbon-hydrogen bonds. Exhibits high catalytic activity for the formation of hydroxyestrogens from estrone (E1) and 17beta-estradiol (E2), namely 2-hydroxy E1 and E2, as well as D-ring hydroxylated E1 and E2 at the C15alpha and C16alpha positions. Displays different regioselectivities for polyunsaturated fatty acids (PUFA) hydroxylation. Catalyzes the epoxidation of double bonds of certain PUFA. Converts arachidonic acid toward epoxyeicosatrienoic acid (EET) regioisomers, 8,9-, 11,12-, and 14,15-EET, that function as lipid mediators in the vascular system. Displays an absolute stereoselectivity in the epoxidation of eicosapentaenoic acid (EPA) producing the 17(R),18(S) enantiomer. May play an important role in all-trans retinoic acid biosynthesis in extrahepatic tissues. Catalyzes two successive oxidative transformation of all-trans retinol to all-trans retinal and then to the active form all-trans retinoic acid. May also participate in eicosanoids metabolism by converting hydroperoxide species into oxo metabolites (lipoxygenase-like reaction, NADPH-independent). The protein is Cytochrome P450 1A1 of Rattus norvegicus (Rat).